The chain runs to 132 residues: D-ribose pyranase (132 aa).

The active-site Proton donor is H20. Substrate contacts are provided by residues D28, H98, and 120-122; that span reads YAN.

This sequence belongs to the RbsD / FucU family. RbsD subfamily. Homodecamer.

It localises to the cytoplasm. The enzyme catalyses beta-D-ribopyranose = beta-D-ribofuranose. It participates in carbohydrate metabolism; D-ribose degradation; D-ribose 5-phosphate from beta-D-ribopyranose: step 1/2. Functionally, catalyzes the interconversion of beta-pyran and beta-furan forms of D-ribose. This Geobacillus thermodenitrificans (strain NG80-2) protein is D-ribose pyranase.